Consider the following 440-residue polypeptide: Adenylosuccinate synthetase (440 aa).

Residues 11–17 (GDEGKGG) and 39–41 (GHT) each bind GTP. D12 acts as the Proton acceptor in catalysis. D12 and G39 together coordinate Mg(2+). IMP contacts are provided by residues 12–15 (DEGK), 37–40 (NAGH), T127, R141, Q230, T245, and R311. H40 functions as the Proton donor in the catalytic mechanism. 307 to 313 (TVTGRPR) lines the substrate pocket. GTP is bound by residues R313, 339–341 (HLD), and 424–426 (GVG).

This sequence belongs to the adenylosuccinate synthetase family. As to quaternary structure, homodimer. Requires Mg(2+) as cofactor.

It localises to the cytoplasm. It catalyses the reaction IMP + L-aspartate + GTP = N(6)-(1,2-dicarboxyethyl)-AMP + GDP + phosphate + 2 H(+). Its pathway is purine metabolism; AMP biosynthesis via de novo pathway; AMP from IMP: step 1/2. Functionally, plays an important role in the de novo pathway of purine nucleotide biosynthesis. Catalyzes the first committed step in the biosynthesis of AMP from IMP. This chain is Adenylosuccinate synthetase, found in Halobacterium salinarum (strain ATCC 29341 / DSM 671 / R1).